The sequence spans 197 residues: Adrenodoxin-like protein 1, mitochondrial (197 aa).

A mitochondrion-targeting transit peptide spans 1-35; it reads MIGHRISRLGSTIVKQLAREGYLATYGTKNLHRSY. The region spanning 79 to 184 is the 2Fe-2S ferredoxin-type domain; the sequence is EKITIIFVDK…GVRLAIPSAT (106 aa). Residues C118, C124, C127, and C165 each contribute to the [2Fe-2S] cluster site.

Belongs to the adrenodoxin/putidaredoxin family. Requires [2Fe-2S] cluster as cofactor.

It localises to the mitochondrion matrix. In terms of biological role, associates in vitro with the adrenodoxin reductase MFDR to form an efficient low potential electron transfer chain that is able to reduce cytochrome C. Functions as accessory mitochondrial protein involved with BIO2 in the plant biotin synthase reaction. The polypeptide is Adrenodoxin-like protein 1, mitochondrial (Arabidopsis thaliana (Mouse-ear cress)).